The following is a 279-amino-acid chain: Protein COP1 SUPPRESSOR 2 (279 aa).

Disordered regions lie at residues 1–29 (MPPKRNFRKRSFEEEEEDNDVNKAAISEE) and 57–79 (SSTAQSSIGKVKPVEKTETEGEK). Positions 68 to 79 (KPVEKTETEGEK) are enriched in basic and acidic residues. Residues 86 to 183 (DTFAQETAVL…EETEAAKKLL (98 aa)) adopt a coiled-coil conformation. Basic and acidic residues predominate over residues 217 to 229 (LRREHPELYKDRG). A disordered region spans residues 217 to 279 (LRREHPELYK…KRERNRVMRR (63 aa)). The span at 250–260 (ADSGKSRQAAT) shows a compositional bias: polar residues. Positions 270-279 (KRERNRVMRR) are enriched in basic residues.

It belongs to the TLS1 family. As to quaternary structure, interacts with COP1.

It localises to the nucleus. It is found in the nucleus speckle. Inhibits E3 ubiquitin-protein ligase activity of COP1, a central repressor of seedling photomorphogenesis. Represses COP1-mediated turnover of HY5 in the dark. Required for primary root development under normal light growth conditions. The chain is Protein COP1 SUPPRESSOR 2 from Arabidopsis thaliana (Mouse-ear cress).